The sequence spans 335 residues: Anthranilate phosphoribosyltransferase (335 aa).

5-phospho-alpha-D-ribose 1-diphosphate-binding positions include Gly79, 82–83, Ser87, 89–92, 107–115, and Ser119; these read GD, NIST, and KHGNRSISS. Gly79 provides a ligand contact to anthranilate. Residue Ser91 coordinates Mg(2+). An anthranilate-binding site is contributed by Asn110. Anthranilate is bound at residue Arg165. The Mg(2+) site is built by Asp224 and Glu225.

Belongs to the anthranilate phosphoribosyltransferase family. Homodimer. It depends on Mg(2+) as a cofactor.

It catalyses the reaction N-(5-phospho-beta-D-ribosyl)anthranilate + diphosphate = 5-phospho-alpha-D-ribose 1-diphosphate + anthranilate. Its pathway is amino-acid biosynthesis; L-tryptophan biosynthesis; L-tryptophan from chorismate: step 2/5. Its function is as follows. Catalyzes the transfer of the phosphoribosyl group of 5-phosphorylribose-1-pyrophosphate (PRPP) to anthranilate to yield N-(5'-phosphoribosyl)-anthranilate (PRA). In Streptococcus mutans serotype c (strain ATCC 700610 / UA159), this protein is Anthranilate phosphoribosyltransferase.